The chain runs to 193 residues: Hypoxanthine/guanine phosphoribosyltransferase (193 aa).

This sequence belongs to the purine/pyrimidine phosphoribosyltransferase family. Archaeal HPRT subfamily. As to quaternary structure, homodimer.

The protein localises to the cytoplasm. The enzyme catalyses IMP + diphosphate = hypoxanthine + 5-phospho-alpha-D-ribose 1-diphosphate. It catalyses the reaction GMP + diphosphate = guanine + 5-phospho-alpha-D-ribose 1-diphosphate. The protein operates within purine metabolism; IMP biosynthesis via salvage pathway; IMP from hypoxanthine: step 1/1. Functionally, catalyzes a salvage reaction resulting in the formation of IMP that is energically less costly than de novo synthesis. In Methanothermobacter thermautotrophicus (strain ATCC 29096 / DSM 1053 / JCM 10044 / NBRC 100330 / Delta H) (Methanobacterium thermoautotrophicum), this protein is Hypoxanthine/guanine phosphoribosyltransferase.